We begin with the raw amino-acid sequence, 835 residues long: Protein translocase subunit SecA (835 aa).

ATP contacts are provided by residues Q85, 103 to 107, and D492; that span reads GEGKT. The interval 788–807 is disordered; it reads VQGEAVHPSSDGEEAKKKPV. Zn(2+) is bound by residues C819, C821, C830, and C831.

Belongs to the SecA family. Monomer and homodimer. Part of the essential Sec protein translocation apparatus which comprises SecA, SecYEG and auxiliary proteins SecDF. Other proteins may also be involved. Zn(2+) is required as a cofactor.

It localises to the cell membrane. Its subcellular location is the cytoplasm. The catalysed reaction is ATP + H2O + cellular proteinSide 1 = ADP + phosphate + cellular proteinSide 2.. In terms of biological role, part of the Sec protein translocase complex. Interacts with the SecYEG preprotein conducting channel. Has a central role in coupling the hydrolysis of ATP to the transfer of proteins into and across the cell membrane, serving as an ATP-driven molecular motor driving the stepwise translocation of polypeptide chains across the membrane. In Bacillus cereus (strain B4264), this protein is Protein translocase subunit SecA.